Reading from the N-terminus, the 337-residue chain is Cytoskeleton protein RodZ (337 aa).

Topologically, residues 1 to 111 are cytoplasmic; sequence MNTEATHDQN…LGKRRKKRDG (111 aa). The 53-residue stretch at 19 to 71 folds into the HTH cro/C1-type domain; it reads LRNAREQLGLSQQAVAERLCLKVSTVRDIEEDKAPADLASTFLRGYIRSYARL. The H-T-H motif DNA-binding region spans 30–49; that stretch reads QQAVAERLCLKVSTVRDIEE. The helical; Signal-anchor for type II membrane protein transmembrane segment at 112 to 132 threads the bilayer; it reads WLMTFTWLVLFVVIGLSGAWW. The Periplasmic portion of the chain corresponds to 133-337; it reads WQDHKAQQEE…TLNAEQSPAQ (205 aa). The span at 145-167 shows a compositional bias: polar residues; sequence TMADQSSAELSSNSEQGQSVPLN. The disordered stretch occupies residues 145–218; that stretch reads TMADQSSAEL…AVVSPSQANV (74 aa). Residues 168–207 are compositionally biased toward low complexity; that stretch reads TSTTTDPATTSTPPASVDTTATNTQTPAVTAPAPAVDPQQ. The segment covering 208–218 has biased composition (polar residues); it reads NAVVSPSQANV.

It belongs to the RodZ family.

It is found in the cell inner membrane. Its function is as follows. Cytoskeletal protein that is involved in cell-shape control through regulation of the length of the long axis. In Shigella flexneri serotype 5b (strain 8401), this protein is Cytoskeleton protein RodZ.